We begin with the raw amino-acid sequence, 319 residues long: tRNA U34 carboxymethyltransferase (319 aa).

Residues Lys-88, Trp-102, Lys-107, Gly-126, 176–177, Met-192, Tyr-196, and Arg-311 each bind carboxy-S-adenosyl-L-methionine; that span reads LE.

Belongs to the class I-like SAM-binding methyltransferase superfamily. CmoB family. In terms of assembly, homotetramer.

The catalysed reaction is carboxy-S-adenosyl-L-methionine + 5-hydroxyuridine(34) in tRNA = 5-carboxymethoxyuridine(34) in tRNA + S-adenosyl-L-homocysteine + H(+). Its function is as follows. Catalyzes carboxymethyl transfer from carboxy-S-adenosyl-L-methionine (Cx-SAM) to 5-hydroxyuridine (ho5U) to form 5-carboxymethoxyuridine (cmo5U) at position 34 in tRNAs. The protein is tRNA U34 carboxymethyltransferase of Pseudomonas syringae pv. syringae (strain B728a).